The primary structure comprises 239 residues: Phosducin-like protein 3 (239 aa).

The segment at 16–37 (KKGILPPKETPVEEEEDEQLHL) is disordered. Residues 28 to 201 (EEEEDEQLHL…LEWRLSESGA (174 aa)) form the Phosducin domain. The residue at position 41 (Ser-41) is a Phosphoserine. The interval 89-239 (FGELKEISGQ…RDGEEDSDED (151 aa)) is thioredoxin fold. Residues 217-227 (QLMTSIRCSAN) are compositionally biased toward polar residues. The segment at 217-239 (QLMTSIRCSANTHRDGEEDSDED) is disordered.

It belongs to the phosducin family. Interacts (via thioredoxin fold region) with kdr/vegfr2 (via juxtamembrane domain). As to expression, expressed in endothelial cells.

The protein resides in the cytoplasm. Its subcellular location is the perinuclear region. It localises to the endoplasmic reticulum. Its function is as follows. Acts as a chaperone for the angiogenic VEGF receptor KDR/VEGFR2, increasing its abundance by inhibiting its ubiquitination and degradation. Inhibits the folding activity of the chaperonin-containing T-complex (CCT) which leads to inhibition of cytoskeletal actin folding. Acts as a chaperone during heat shock alongside HSP90 and HSP40/70 chaperone complexes. Modulates the activation of caspases during apoptosis. This chain is Phosducin-like protein 3, found in Danio rerio (Zebrafish).